A 346-amino-acid chain; its full sequence is Protease inhibitor Egf1.5b (346 aa).

Positions 1 to 28 are cleaved as a signal peptide; it reads MYIDTGIMSNNIFLFAFFALVGLTRIEA. The TIL domain maps to 52–104; sequence CRENEHYNSTRIECEDECNDRNNKLCYRFQQFCWCNEGYIRNSSHICVKLEDC.

The protein belongs to the polydnaviridae EGF-like motif protein family. Interacts with host PAP1, PAP3 and SPH2.

Functionally, counteracts the host humoral immune response by inhibiting the processing and the amidolytic activity of host PAP1 and PAP3. Thereby, melanization of host hemolymph, normally producing several reactive intermediates toxic for viruses, is deregulated and proper immune response cannot occur. The protein is Protease inhibitor Egf1.5b (O5) of Microplitis demolitor (Parasitoid wasp).